Consider the following 902-residue polypeptide: Chitin synthase 3 (902 aa).

A compositionally biased stretch (basic and acidic residues) spans 1–15 (MAYNRLDDDYFDNRR). A disordered region spans residues 1–68 (MAYNRLDDDY…MGPGRHTPSD (68 aa)). Positions 19–30 (NRPPPHRTPSPG) are enriched in pro residues. Asn-80 carries an N-linked (GlcNAc...) asparagine glycan. Positions 104–161 (HHDAYYNPTYTPTPNEAQTPYGEPGYEHDGRPLLPQQDSYGQYSDNPQQQQQQQGGLK) are disordered. 2 stretches are compositionally biased toward polar residues: residues 111–121 (PTYTPTPNEAQ) and 139–150 (QQDSYGQYSDNP). A run of 9 helical transmembrane segments spans residues 449–469 (SAFG…YIAL), 547–567 (RWLN…YQFF), 577–597 (IAFF…WFAI), 623–643 (ILGV…FVLA), 656–676 (LAMI…AVFI), 699–719 (VVVT…VASL), 731–751 (LVQY…YAFC), 830–850 (VVVL…LSTA), and 874–894 (VVLY…MWFL).

Belongs to the chitin synthase family. Class II subfamily.

It localises to the cell membrane. It catalyses the reaction [(1-&gt;4)-N-acetyl-beta-D-glucosaminyl](n) + UDP-N-acetyl-alpha-D-glucosamine = [(1-&gt;4)-N-acetyl-beta-D-glucosaminyl](n+1) + UDP + H(+). Polymerizes chitin, a structural polymer of the cell wall and septum, by transferring the sugar moiety of UDP-GlcNAc to the non-reducing end of the growing chitin polymer. CHS1 and CHS3 have compensatory functions in cell wall modifications in responses to stresses. Might function as a negative regulator on expression of other CHS genes. This chain is Chitin synthase 3, found in Pyricularia oryzae (strain 70-15 / ATCC MYA-4617 / FGSC 8958) (Rice blast fungus).